The following is a 550-amino-acid chain: Glucose-6-phosphate isomerase (550 aa).

Catalysis depends on Glu-356, which acts as the Proton donor. Active-site residues include His-387 and Lys-515.

It belongs to the GPI family.

It localises to the cytoplasm. The catalysed reaction is alpha-D-glucose 6-phosphate = beta-D-fructose 6-phosphate. It participates in carbohydrate biosynthesis; gluconeogenesis. The protein operates within carbohydrate degradation; glycolysis; D-glyceraldehyde 3-phosphate and glycerone phosphate from D-glucose: step 2/4. Catalyzes the reversible isomerization of glucose-6-phosphate to fructose-6-phosphate. This Vibrio parahaemolyticus serotype O3:K6 (strain RIMD 2210633) protein is Glucose-6-phosphate isomerase.